Consider the following 329-residue polypeptide: Probable quinone oxidoreductase (329 aa).

Ser191 carries the phosphoserine modification.

It belongs to the zinc-containing alcohol dehydrogenase family. Quinone oxidoreductase subfamily.

It is found in the cytoplasm. The protein localises to the nucleus. It catalyses the reaction 2 a quinone + NADPH + H(+) = 2 a 1,4-benzosemiquinone + NADP(+). This chain is Probable quinone oxidoreductase (zta1), found in Schizosaccharomyces pombe (strain 972 / ATCC 24843) (Fission yeast).